The chain runs to 305 residues: Urease accessory protein UreD (305 aa).

The protein belongs to the UreD family. As to quaternary structure, ureD, UreF and UreG form a complex that acts as a GTP-hydrolysis-dependent molecular chaperone, activating the urease apoprotein by helping to assemble the nickel containing metallocenter of UreC. The UreE protein probably delivers the nickel.

It is found in the cytoplasm. Its function is as follows. Required for maturation of urease via the functional incorporation of the urease nickel metallocenter. The chain is Urease accessory protein UreD from Delftia acidovorans (strain DSM 14801 / SPH-1).